Reading from the N-terminus, the 38-residue chain is Large ribosomal subunit protein bL36 (38 aa).

It belongs to the bacterial ribosomal protein bL36 family.

This Chloroherpeton thalassium (strain ATCC 35110 / GB-78) protein is Large ribosomal subunit protein bL36.